Reading from the N-terminus, the 638-residue chain is Probable lysine-specific demethylase 4F (638 aa).

One can recognise a JmjN domain in the interval 15 to 57; the sequence is IMTFYPTMEEFADFNTYVAYMESQGAHRAGLAKVIPPKEWKAR. Tyrosine 133 is a binding site for 2-oxoglutarate. In terms of domain architecture, JmjC spans 143–309; sequence EESTKQWNLG…YGKVASQCSC (167 aa). The Fe cation site is built by histidine 189 and glutamate 191. 2-oxoglutarate-binding residues include asparagine 199 and lysine 207. The Zn(2+) site is built by cysteine 235 and histidine 241. A 2-oxoglutarate-binding site is contributed by lysine 242. Histidine 277 contacts Fe cation. Cysteine 307 and cysteine 309 together coordinate Zn(2+). The disordered stretch occupies residues 426–474; that stretch reads PCRGCGRGRGRGRGRGRRPRELGTEETTVQSAAKRRLSVGTGSRAPGRK. Basic residues predominate over residues 431–443; the sequence is GRGRGRGRGRGRR.

Belongs to the JHDM3 histone demethylase family. Fe(2+) serves as cofactor.

The protein resides in the nucleus. It carries out the reaction N(6),N(6),N(6)-trimethyl-L-lysyl(9)-[histone H3] + 2 2-oxoglutarate + 2 O2 = N(6)-methyl-L-lysyl(9)-[histone H3] + 2 formaldehyde + 2 succinate + 2 CO2. Its function is as follows. Probable histone demethylase that specifically demethylates 'Lys-9' of histone H3, thereby playing a central role in histone code. The sequence is that of Probable lysine-specific demethylase 4F from Homo sapiens (Human).